The following is a 1476-amino-acid chain: SH3 and multiple ankyrin repeat domains protein 2 (1476 aa).

The span at 66–76 (LSPQLLQQTPS) shows a compositional bias: polar residues. A disordered region spans residues 66–134 (LSPQLLQQTP…GANKDSLSTF (69 aa)). The SH3 domain occupies 147–206 (VPGRLFVAVKPYQPQVDGEIPLHRGDRVKVLSIGEGGFWEGSARGHIGWFPAECVEEVQC). V162 is modified (phosphoserine). The region spanning 247-341 (TVVLQKKDNE…HLILKVVTVT (95 aa)) is the PDZ domain. At S372 the chain carries Phosphoserine. The segment at 391–412 (RKKKDKPEEIVPASKPSRTAEN) is disordered. S456 is modified (phosphoserine). Position 485 is a phosphothreonine (T485). Residues 503-533 (LSMPDTSEDIPPPPQSVPPSPPPPSPTTYNC) form a disordered region. Residues 512–528 (IPPPPQSVPPSPPPPSP) are compositionally biased toward pro residues. At S586 the chain carries Phosphoserine. Disordered stretches follow at residues 659–916 (TIIV…KDRR), 946–983 (VPMA…TEGA), and 1057–1153 (PALA…ESMD). Residues 666 to 678 (STSSSGKSSQGSS) show a composition bias toward low complexity. Over residues 711-722 (VRDREKRLEARR) the composition is skewed to basic and acidic residues. S724 is subject to Phosphoserine. The span at 783–795 (LGGGEAGAQGEAG) shows a compositional bias: gly residues. Residues 833–846 (RLLDPSSPLALALS) are compositionally biased toward low complexity. Basic and acidic residues-rich tracts occupy residues 847–868 (ARDR…KADL) and 899–916 (RRQE…KDRR). T903 bears the Phosphothreonine mark. Polar residues predominate over residues 1070 to 1085 (TSQPPTLNSSQPANST). The span at 1119–1130 (VDSRSSSDHHLE) shows a compositional bias: basic and acidic residues. Positions 1131–1151 (TTSTISTVSSISTLSSEGGES) are enriched in low complexity. The SH3-binding signature appears at 1169-1175 (PPVPPKP). Disordered regions lie at residues 1195 to 1216 (EDTD…SAQA) and 1260 to 1403 (NRGK…ISNK). Over residues 1202-1212 (IPPPAPPPPPG) the composition is skewed to pro residues. Residues 1291 to 1305 (STVSGTRSTTVTFTV) show a composition bias toward low complexity. T1292 is a glycosylation site (O-linked (GlcNAc) threonine). The span at 1307 to 1317 (PGTSQPITLQS) shows a compositional bias: polar residues. Phosphoserine is present on residues S1334 and S1338. Residues 1364-1375 (LSDVFSLPSQSP) are compositionally biased toward polar residues. Residues 1387-1401 (RSRSPSPSILQQPIS) are compositionally biased toward low complexity. The region spanning 1413–1476 (WTKPDVADWL…ERALKQLLDR (64 aa)) is the SAM domain.

This sequence belongs to the SHANK family. Is part of a complex with DLG4/PSD-95 and DLGAP1/GKAP. Interacts with CTTN/cortactin SH3 domain, DLGAP1/GKAP and alpha-latrotoxin receptor 1. Interacts with DNM2, DBNL, GRID2, BAIAP2, SLC9A3, PLCB3 and CFTR. Interacts (via proline-rich region) with PDE4D. Interacts with ABI1 (via SH3 domain). Detected in brain (at protein level), where it is highly expressed in Purkinje cells.

It localises to the apical cell membrane. Its subcellular location is the cytoplasm. The protein localises to the synapse. The protein resides in the postsynaptic density. It is found in the cell projection. It localises to the dendritic spine. Its subcellular location is the growth cone. In terms of biological role, seems to be an adapter protein in the postsynaptic density (PSD) of excitatory synapses that interconnects receptors of the postsynaptic membrane including NMDA-type and metabotropic glutamate receptors, and the actin-based cytoskeleton. May play a role in the structural and functional organization of the dendritic spine and synaptic junction. The chain is SH3 and multiple ankyrin repeat domains protein 2 (Shank2) from Mus musculus (Mouse).